The following is a 351-amino-acid chain: Putative NBPF family member NBPF5 (351 aa).

Coiled coils occupy residues 10–43 (SERA…EKFL) and 69–115 (DSVL…KLRE). The tract at residues 157–285 (HLVHKLSPEN…VPPRHHDKSN (129 aa)) is disordered. Residues 165-179 (ENDEDEDEDEDDKDE) are compositionally biased toward acidic residues. The Olduvai domain maps to 174-261 (EDDKDEEVEK…EEEEALNIPP (88 aa)). Over residues 192–202 (EVQKTEEKEVP) the composition is skewed to basic and acidic residues. The segment covering 214-226 (SNSHNPSNSNQPH) has biased composition (low complexity). Basic and acidic residues-rich tracts occupy residues 232–251 (TFKE…HPHD) and 264–273 (QNDHEEEEGK).

Belongs to the NBPF family. As to expression, expressed in brain and medulla.

It is found in the cytoplasm. This Homo sapiens (Human) protein is Putative NBPF family member NBPF5.